The following is a 179-amino-acid chain: ADP-ribosylation factor-like protein 5A (179 aa).

Gly2 is lipidated: N-myristoyl glycine. Residues 23 to 30 (GLDNAGKT), 66 to 70 (DIGGQ), 125 to 128 (NKQD), and Ala159 each bind GTP.

Belongs to the small GTPase superfamily. Arf family.

Lacks ADP-ribosylation enhancing activity. The chain is ADP-ribosylation factor-like protein 5A (ARL5A) from Homo sapiens (Human).